The following is a 342-amino-acid chain: Farnesyl pyrophosphate synthase 2 (342 aa).

The isopentenyl diphosphate site is built by Lys-47, Arg-50, and Gln-86. Residues Asp-93 and Asp-97 each contribute to the Mg(2+) site. A dimethylallyl diphosphate-binding site is contributed by Arg-102. An isopentenyl diphosphate-binding site is contributed by Arg-103. Residues Lys-190, Thr-191, Gln-229, Lys-246, and Lys-255 each contribute to the dimethylallyl diphosphate site.

The protein belongs to the FPP/GGPP synthase family. Requires Mg(2+) as cofactor.

It localises to the cytoplasm. The catalysed reaction is isopentenyl diphosphate + dimethylallyl diphosphate = (2E)-geranyl diphosphate + diphosphate. It carries out the reaction isopentenyl diphosphate + (2E)-geranyl diphosphate = (2E,6E)-farnesyl diphosphate + diphosphate. It functions in the pathway isoprenoid biosynthesis; farnesyl diphosphate biosynthesis; farnesyl diphosphate from geranyl diphosphate and isopentenyl diphosphate: step 1/1. The protein operates within isoprenoid biosynthesis; geranyl diphosphate biosynthesis; geranyl diphosphate from dimethylallyl diphosphate and isopentenyl diphosphate: step 1/1. In terms of biological role, catalyzes the sequential condensation of isopentenyl pyrophosphate with the allylic pyrophosphates, dimethylallyl pyrophosphate, and then with the resultant geranylpyrophosphate to the ultimate product farnesyl pyrophosphate. The chain is Farnesyl pyrophosphate synthase 2 (FPS2) from Lupinus albus (White lupine).